A 421-amino-acid chain; its full sequence is Histidine--tRNA ligase (421 aa).

It belongs to the class-II aminoacyl-tRNA synthetase family. Homodimer.

It is found in the cytoplasm. The enzyme catalyses tRNA(His) + L-histidine + ATP = L-histidyl-tRNA(His) + AMP + diphosphate + H(+). The protein is Histidine--tRNA ligase of Solidesulfovibrio magneticus (strain ATCC 700980 / DSM 13731 / RS-1) (Desulfovibrio magneticus).